We begin with the raw amino-acid sequence, 189 residues long: Thermostable direct hemolysin 1 (189 aa).

The N-terminal stretch at Met1 to Ala24 is a signal peptide. A disulfide bridge links Cys175 with Cys185.

The protein belongs to the TDH hemolysin family. In terms of assembly, homodimer.

Functionally, bacterial hemolysins are exotoxins that attack blood cell membranes and cause cell rupture by mechanisms not clearly defined. The protein is Thermostable direct hemolysin 1 (tdh1) of Vibrio parahaemolyticus serotype O3:K6 (strain RIMD 2210633).